A 265-amino-acid polypeptide reads, in one-letter code: Thymidine kinase 2, mitochondrial (265 aa).

The N-terminal 33 residues, Met-1–Arg-33, are a transit peptide targeting the mitochondrion. Residues Gly-20–Arg-32 show a composition bias toward low complexity. Positions Gly-20–Lys-47 are disordered. Gly-57 to Thr-65 provides a ligand contact to ATP. The active-site Proton acceptor is Glu-133.

It belongs to the DCK/DGK family. As to quaternary structure, monomer. Predominantly expressed in liver, pancreas, muscle, and brain.

The protein localises to the mitochondrion. The enzyme catalyses thymidine + ATP = dTMP + ADP + H(+). The catalysed reaction is 2'-deoxycytidine + ATP = dCMP + ADP + H(+). It catalyses the reaction 2'-deoxyuridine + ATP = dUMP + ADP + H(+). In terms of biological role, phosphorylates thymidine, deoxycytidine, and deoxyuridine in the mitochondrial matrix. In non-replicating cells, where cytosolic dNTP synthesis is down-regulated, mtDNA synthesis depends solely on TK2 and DGUOK. Widely used as target of antiviral and chemotherapeutic agents. The protein is Thymidine kinase 2, mitochondrial of Homo sapiens (Human).